The primary structure comprises 359 residues: tRNA N6-adenosine threonylcarbamoyltransferase (359 aa).

2 residues coordinate Fe cation: His-115 and His-119. Substrate contacts are provided by residues 137–141 (LVSGG), Asp-170, Gly-183, and Asn-283. Asp-311 serves as a coordination point for Fe cation. A disordered region spans residues 328–359 (APDSLDIAPRSRWPLDEKSAPVFGTGRRGAKA).

Belongs to the KAE1 / TsaD family. It depends on Fe(2+) as a cofactor.

Its subcellular location is the cytoplasm. The enzyme catalyses L-threonylcarbamoyladenylate + adenosine(37) in tRNA = N(6)-L-threonylcarbamoyladenosine(37) in tRNA + AMP + H(+). In terms of biological role, required for the formation of a threonylcarbamoyl group on adenosine at position 37 (t(6)A37) in tRNAs that read codons beginning with adenine. Is involved in the transfer of the threonylcarbamoyl moiety of threonylcarbamoyl-AMP (TC-AMP) to the N6 group of A37, together with TsaE and TsaB. TsaD likely plays a direct catalytic role in this reaction. The polypeptide is tRNA N6-adenosine threonylcarbamoyltransferase (Brucella canis (strain ATCC 23365 / NCTC 10854 / RM-666)).